The chain runs to 389 residues: Trans-2-enoyl-CoA reductase [NADH] (389 aa).

NAD(+)-binding positions include 47 to 52, 73 to 74, 110 to 111, and 138 to 139; these read GASTGY, FE, DA, and LA. Y224 is a binding site for substrate. The active-site Proton donor is the Y234. Residues K243 and 272–274 contribute to the NAD(+) site; that span reads LVT.

The protein belongs to the TER reductase family. In terms of assembly, monomer.

It carries out the reaction a 2,3-saturated acyl-CoA + NAD(+) = a (2E)-enoyl-CoA + NADH + H(+). The protein operates within lipid metabolism; fatty acid biosynthesis. Functionally, involved in the fatty acid synthesis (FAS II). Catalyzes the reduction of a carbon-carbon double bond in an enoyl moiety that is covalently linked to a coenzyme A (CoA). The protein is Trans-2-enoyl-CoA reductase [NADH] of Clostridium perfringens (strain SM101 / Type A).